The chain runs to 334 residues: GTP 3',8-cyclase (334 aa).

Residues 13-239 (RFQRKFYYLR…KARADNDGPA (227 aa)) form the Radical SAM core domain. Arginine 22 is a GTP binding site. [4Fe-4S] cluster-binding residues include cysteine 29 and cysteine 33. Tyrosine 35 lines the S-adenosyl-L-methionine pocket. Cysteine 36 contacts [4Fe-4S] cluster. Arginine 73 is a GTP binding site. Glycine 77 contributes to the S-adenosyl-L-methionine binding site. Threonine 104 contributes to the GTP binding site. Serine 128 is a binding site for S-adenosyl-L-methionine. Lysine 165 lines the GTP pocket. Methionine 199 is a binding site for S-adenosyl-L-methionine. Residues cysteine 262 and cysteine 265 each contribute to the [4Fe-4S] cluster site. 267–269 (RLR) contacts GTP. Cysteine 279 is a [4Fe-4S] cluster binding site.

It belongs to the radical SAM superfamily. MoaA family. In terms of assembly, monomer and homodimer. The cofactor is [4Fe-4S] cluster.

It carries out the reaction GTP + AH2 + S-adenosyl-L-methionine = (8S)-3',8-cyclo-7,8-dihydroguanosine 5'-triphosphate + 5'-deoxyadenosine + L-methionine + A + H(+). Its pathway is cofactor biosynthesis; molybdopterin biosynthesis. Its function is as follows. Catalyzes the cyclization of GTP to (8S)-3',8-cyclo-7,8-dihydroguanosine 5'-triphosphate. This Vibrio cholerae serotype O1 (strain M66-2) protein is GTP 3',8-cyclase.